Consider the following 203-residue polypeptide: B-cell CLL/lymphoma 7 protein family member B-A (203 aa).

Disordered stretches follow at residues 55 to 80 and 94 to 148; these read KEKE…ESSD and SNQS…EIME. Positions 109–129 are enriched in low complexity; sequence ADSSNNSSPPASEPVSPAPQS.

It belongs to the BCL7 family.

The protein is B-cell CLL/lymphoma 7 protein family member B-A (bcl7ba) of Danio rerio (Zebrafish).